We begin with the raw amino-acid sequence, 498 residues long: ATP synthase subunit beta, chloroplastic (498 aa).

172 to 179 provides a ligand contact to ATP; it reads GGAGVGKT.

It belongs to the ATPase alpha/beta chains family. In terms of assembly, F-type ATPases have 2 components, CF(1) - the catalytic core - and CF(0) - the membrane proton channel. CF(1) has five subunits: alpha(3), beta(3), gamma(1), delta(1), epsilon(1). CF(0) has four main subunits: a(1), b(1), b'(1) and c(9-12).

The protein localises to the plastid. Its subcellular location is the chloroplast thylakoid membrane. The catalysed reaction is ATP + H2O + 4 H(+)(in) = ADP + phosphate + 5 H(+)(out). In terms of biological role, produces ATP from ADP in the presence of a proton gradient across the membrane. The catalytic sites are hosted primarily by the beta subunits. This Daucus carota (Wild carrot) protein is ATP synthase subunit beta, chloroplastic.